The chain runs to 716 residues: Segment polarity protein dishevelled homolog DVL-3 (716 aa).

Positions 1 to 82 (MGETKIIYHL…RVVSWLVSAE (82 aa)) constitute a DIX domain. Arg27 carries the omega-N-methylarginine modification. 2 positions are modified to phosphoserine: Ser48 and Ser125. A disordered region spans residues 85-235 (HPDPAPFCAD…VSRIERSSSF (151 aa)). Residues 142-156 (QRERPRRRDGPEHAT) are compositionally biased toward basic and acidic residues. Residues 175–190 (SSSTLMSSELETTSFF) show a composition bias toward low complexity. Phosphoserine is present on Ser192. The span at 199-212 (SRFSSSTEQSSASR) shows a compositional bias: low complexity. Arg212 carries the omega-N-methylarginine modification. Residues 213-226 (LMRRHKRRRRKQKV) are compositionally biased toward basic residues. The PDZ domain occupies 249 to 321 (TVTLNMEKYN…NDDAVRVLRE (73 aa)). Position 271 is an asymmetric dimethylarginine; by PRMT1; alternate (Arg271). A symmetric dimethylarginine; by PRMT7; alternate mark is found at Arg271 and Arg342. Arg342 bears the Omega-N-methylarginine; alternate mark. Thr346 carries the post-translational modification Phosphothreonine. Positions 422-496 (PESGLEVRDR…SEQCYYIFGD (75 aa)) constitute a DEP domain. The tract at residues 546–691 (PYNPHPGFPE…PPGRDLASVP (146 aa)) is disordered. The span at 565–581 (ASSQHSEGSRSSGSNRS) shows a compositional bias: low complexity. Basic and acidic residues-rich tracts occupy residues 582 to 595 (GSDR…KAGD) and 604 to 622 (ESDH…RAPS). Arg614 is subject to Symmetric dimethylarginine; by PRMT7. The span at 653-682 (YGPPGVPPLYGPPMLMMPPPPAAMGPPGAP) shows a compositional bias: pro residues. Ser697 carries the phosphoserine modification. Arg698 is modified (omega-N-methylarginine; alternate). At Arg698 the chain carries Dimethylated arginine; alternate. Residue Ser700 is modified to Phosphoserine.

The protein belongs to the DSH family. Interacts (via the PDZ domain) with the C-terminal regions of VANGL1 and VANGL2. Interacts (via the region containing both the PDZ and DEP domains) with LRRFIP2; the DIX domain may inhibit this interaction. Interacts with CYLD, CEP164 and DAB2. Interacts with DCDC2. Interacts with FOXK1 and FOXK2. Interacts with DAAM2. Post-translationally, ubiquitinated. Deubiquitinated by CYLD, which acts on 'Lys-63'-linked ubiquitin chains. Phosphorylated by CSNK1D. In terms of processing, arginine methylation may function as a switch in regulation of function in Wnt signaling.

Its subcellular location is the cytoplasm. Functionally, involved in the signal transduction pathway mediated by multiple Wnt genes. The sequence is that of Segment polarity protein dishevelled homolog DVL-3 (DVL3) from Homo sapiens (Human).